A 113-amino-acid polypeptide reads, in one-letter code: Large ribosomal subunit protein eL36z (113 aa).

The span at 78-88 (RKLGTHKRAKR) shows a compositional bias: basic residues. The interval 78-113 (RKLGTHKRAKRKREEMSSVLRKMRSLGGAAAAEKKM) is disordered.

Belongs to the eukaryotic ribosomal protein eL36 family.

The polypeptide is Large ribosomal subunit protein eL36z (RPL36A) (Arabidopsis thaliana (Mouse-ear cress)).